Consider the following 98-residue polypeptide: uncharacterized protein (98 aa).

This is an uncharacterized protein from Frog virus 3 (isolate Goorha) (FV-3).